Reading from the N-terminus, the 418-residue chain is Nisin biosynthesis protein NisC (418 aa).

This sequence to B.subtilis SpaC and S.epidermidis EpiC.

Functionally, could be implicated in the processing or the export process of the nisin lantibiotic. This chain is Nisin biosynthesis protein NisC (nisC), found in Lactococcus lactis subsp. lactis (Streptococcus lactis).